The following is a 149-amino-acid chain: Large ribosomal subunit protein uL11 (149 aa).

It belongs to the universal ribosomal protein uL11 family. As to quaternary structure, part of the ribosomal stalk of the 50S ribosomal subunit. Interacts with L10 and the large rRNA to form the base of the stalk. L10 forms an elongated spine to which L12 dimers bind in a sequential fashion forming a multimeric L10(L12)X complex. In terms of processing, one or more lysine residues are methylated.

Its function is as follows. Forms part of the ribosomal stalk which helps the ribosome interact with GTP-bound translation factors. The protein is Large ribosomal subunit protein uL11 of Methylorubrum extorquens (strain CM4 / NCIMB 13688) (Methylobacterium extorquens).